The chain runs to 67 residues: Protein AaeX (67 aa).

The next 2 helical transmembrane spans lie at 3-23 (LFPV…ELLL) and 43-63 (FVWH…YLIS).

Belongs to the AaeX family.

The protein resides in the cell membrane. The polypeptide is Protein AaeX (Escherichia coli O1:K1 / APEC).